The primary structure comprises 145 residues: MIALIQRVTRASVTVEDEVTGEIGPGLLVLLGVEKEDDEQKANRLCERVLGYRIFSDADGKMNLNVQQAGGSVLVVSQFTLAADTERGMRPSFSGGAAPDRAQALYEYFVGRCRQQAINTQTGRFAADMQVELVNDGPVTFWLQV.

The Gly-cisPro motif, important for rejection of L-amino acids signature appears at 137-138 (GP).

It belongs to the DTD family. Homodimer.

Its subcellular location is the cytoplasm. The catalysed reaction is glycyl-tRNA(Ala) + H2O = tRNA(Ala) + glycine + H(+). It carries out the reaction a D-aminoacyl-tRNA + H2O = a tRNA + a D-alpha-amino acid + H(+). Functionally, an aminoacyl-tRNA editing enzyme that deacylates mischarged D-aminoacyl-tRNAs. Also deacylates mischarged glycyl-tRNA(Ala), protecting cells against glycine mischarging by AlaRS. Acts via tRNA-based rather than protein-based catalysis; rejects L-amino acids rather than detecting D-amino acids in the active site. By recycling D-aminoacyl-tRNA to D-amino acids and free tRNA molecules, this enzyme counteracts the toxicity associated with the formation of D-aminoacyl-tRNA entities in vivo and helps enforce protein L-homochirality. This Salmonella arizonae (strain ATCC BAA-731 / CDC346-86 / RSK2980) protein is D-aminoacyl-tRNA deacylase.